The chain runs to 366 residues: 3-beta-hydroxysteroid dehydrogenase (366 aa).

Tyr154 acts as the Proton donor in catalysis.

The protein belongs to the 3-beta-HSD family.

It catalyses the reaction testosterone + NAD(+) = androst-4-ene-3,17-dione + NADH + H(+). The catalysed reaction is testosterone + NADP(+) = androst-4-ene-3,17-dione + NADPH + H(+). In terms of biological role, catalyzes the degradation of testosterone into androstenedione. The protein is 3-beta-hydroxysteroid dehydrogenase of Mycolicibacterium neoaurum (Mycobacterium neoaurum).